A 325-amino-acid polypeptide reads, in one-letter code: Tetraacyldisaccharide 4'-kinase (325 aa).

Residue 53–60 (SVGGNGKT) participates in ATP binding.

The protein belongs to the LpxK family.

The catalysed reaction is a lipid A disaccharide + ATP = a lipid IVA + ADP + H(+). The protein operates within glycolipid biosynthesis; lipid IV(A) biosynthesis; lipid IV(A) from (3R)-3-hydroxytetradecanoyl-[acyl-carrier-protein] and UDP-N-acetyl-alpha-D-glucosamine: step 6/6. Its function is as follows. Transfers the gamma-phosphate of ATP to the 4'-position of a tetraacyldisaccharide 1-phosphate intermediate (termed DS-1-P) to form tetraacyldisaccharide 1,4'-bis-phosphate (lipid IVA). The polypeptide is Tetraacyldisaccharide 4'-kinase (Mannheimia succiniciproducens (strain KCTC 0769BP / MBEL55E)).